We begin with the raw amino-acid sequence, 310 residues long: 300 kDa antigen AG231 (310 aa).

The tract at residues 1 to 23 (VTGSCVVTGSCVVTDSCVVTGSC) is 4 X 6 AA tandem repeats of V-V-T-G-S-C. Positions 29 to 106 (VTTQESVTTQ…TQEPVTVEEH (78 aa)) are 13 X 6 AA tandem repeats of V-V-[TI]-[QE]-E-[PH]. Positions 53–101 (VTIEEPVTTQEPVTIEEPVTTQEPVTTQEPVTTQEPVTTQEPVTTQEPV) are enriched in low complexity. A disordered region spans residues 53-310 (VTIEEPVTTQ…FGRGNKNDKK (258 aa)). Composition is skewed to basic and acidic residues over residues 103–114 (VEEHIDEKKGSE) and 147–160 (NKND…KKPS). Residues 107–152 (IDEKKGSEGDNISLSSLSEETEEKSHTKKKKSSWLKFGRGNKNDKK) form a 45 AA repeat 1 repeat. Residues 176–190 (TDSQISVNAQDSVTI) show a composition bias toward polar residues. The segment at 188–265 (VTIQEPTATQ…TQEPSTTQEH (78 aa)) is 13 X 6 AA approximate tandem repeats. Residues 191–235 (QEPTATQEPPTTQELTATQEPTTTQETVTEQEPTTTQETVTAQEP) show a composition bias toward low complexity. Positions 236–263 (ITTQEPVTAQEPVTTQELIATQEPSTTQ) are enriched in polar residues. Over residues 264–273 (EHADEKKASE) the composition is skewed to basic and acidic residues. The 45 AA repeat 2 repeat unit spans residues 266–310 (ADEKKASEGDNISLSRLSEETEEKSHTKKKSSWLKFGRGNKNDKK).

The sequence is that of 300 kDa antigen AG231 (FIRA) from Plasmodium falciparum (isolate FC27 / Papua New Guinea).